We begin with the raw amino-acid sequence, 280 residues long: Acetylglutamate kinase (280 aa).

Residues 64–65, Arg86, and Asn179 each bind substrate; that span reads GG.

The protein belongs to the acetylglutamate kinase family. ArgB subfamily.

The protein localises to the cytoplasm. The catalysed reaction is N-acetyl-L-glutamate + ATP = N-acetyl-L-glutamyl 5-phosphate + ADP. The protein operates within amino-acid biosynthesis; L-arginine biosynthesis; N(2)-acetyl-L-ornithine from L-glutamate: step 2/4. Its function is as follows. Catalyzes the ATP-dependent phosphorylation of N-acetyl-L-glutamate. The sequence is that of Acetylglutamate kinase from Campylobacter fetus subsp. fetus (strain 82-40).